Reading from the N-terminus, the 361-residue chain is Peptide chain release factor 1 (361 aa).

Glutamine 237 is subject to N5-methylglutamine. The interval 287 to 306 (KRAAEEASTRKSLVGSGDRS) is disordered.

This sequence belongs to the prokaryotic/mitochondrial release factor family. In terms of processing, methylated by PrmC. Methylation increases the termination efficiency of RF1.

It localises to the cytoplasm. In terms of biological role, peptide chain release factor 1 directs the termination of translation in response to the peptide chain termination codons UAG and UAA. The polypeptide is Peptide chain release factor 1 (Alteromonas mediterranea (strain DSM 17117 / CIP 110805 / LMG 28347 / Deep ecotype)).